A 182-amino-acid chain; its full sequence is UPF0397 protein BcerKBAB4_2500 (182 aa).

The next 5 helical transmembrane spans lie at 9–29 (VVAIGIGAALYGVLGLWGFSI), 40–60 (AILTVFGALFGPVAGLLIGLI), 71–91 (WGIWWGWVISSGIIGLAMGLI), 114–134 (IAGLIGIVIAIIFAGSFDIIV), and 142–162 (IVIQVLGATIADVIVFLVLGL).

It belongs to the UPF0397 family.

The protein localises to the cell membrane. The sequence is that of UPF0397 protein BcerKBAB4_2500 from Bacillus mycoides (strain KBAB4) (Bacillus weihenstephanensis).